Reading from the N-terminus, the 541-residue chain is Chaperonin GroEL (541 aa).

ATP contacts are provided by residues Thr29–Pro32, Asp86–Thr90, Gly413, Asn476–Ala478, and Asp492.

Belongs to the chaperonin (HSP60) family. Forms a cylinder of 14 subunits composed of two heptameric rings stacked back-to-back. Interacts with the co-chaperonin GroES.

The protein resides in the cytoplasm. It carries out the reaction ATP + H2O + a folded polypeptide = ADP + phosphate + an unfolded polypeptide.. Together with its co-chaperonin GroES, plays an essential role in assisting protein folding. The GroEL-GroES system forms a nano-cage that allows encapsulation of the non-native substrate proteins and provides a physical environment optimized to promote and accelerate protein folding. The sequence is that of Chaperonin GroEL from Enterococcus faecalis (strain ATCC 700802 / V583).